Consider the following 92-residue polypeptide: Putative regulatory protein CKL_1364 (92 aa).

Belongs to the RemA family.

The polypeptide is Putative regulatory protein CKL_1364 (Clostridium kluyveri (strain ATCC 8527 / DSM 555 / NBRC 12016 / NCIMB 10680 / K1)).